A 994-amino-acid polypeptide reads, in one-letter code: Integrator complex subunit 5 (994 aa).

Residues 559–586 (NSNNNNELCNGKDYGKRTKLEPGEDKVD) are disordered. A compositionally biased stretch (basic and acidic residues) spans 571-583 (DYGKRTKLEPGED). 2 helical membrane passes run 769–786 (YSLV…DVMY) and 810–826 (AFIN…LIAG).

The protein belongs to the Integrator subunit 5 family. In terms of assembly, belongs to the multiprotein complex Integrator, at least composed of IntS1, IntS2, IntS3, IntS4, omd/IntS5, IntS6, defl/IntS7, IntS8, IntS9, IntS10, IntS11, IntS12, asun/IntS13, IntS14 and IntS15. The core complex associates with protein phosphatase 2A subunits mts/PP2A and Pp2A-29B, to form the Integrator-PP2A (INTAC) complex.

It localises to the nucleus membrane. It is found in the nucleus. The protein localises to the cytoplasm. Its function is as follows. Component of the integrator complex, a multiprotein complex that terminates RNA polymerase II (Pol II) transcription in the promoter-proximal region of genes. The integrator complex provides a quality checkpoint during transcription elongation by driving premature transcription termination of transcripts that are unfavorably configured for transcriptional elongation: the complex terminates transcription by (1) catalyzing dephosphorylation of the C-terminal domain (CTD) of Pol II subunit Polr2A/Rbp1 and Spt5, and (2) degrading the exiting nascent RNA transcript via endonuclease activity. The integrator complex is also involved in the 3'-end processing of the U7 snRNA, and also the spliceosomal snRNAs U1, U2, U4 and U5. This is Integrator complex subunit 5 from Drosophila melanogaster (Fruit fly).